Reading from the N-terminus, the 380-residue chain is Cytochrome b (380 aa).

4 helical membrane passes run 33-53 (FGSL…FLAM), 77-98 (WLLR…YLHI), 113-133 (WNIG…GYVL), and 178-198 (FFTF…LHLL). The heme b site is built by His83 and His97. The heme b site is built by His182 and His196. His201 is a binding site for a ubiquinone. The next 4 membrane-spanning stretches (helical) occupy residues 226–246 (YKDL…ALLN), 288–308 (LGGV…PVLH), 320–340 (PSQT…WIGG), and 347–367 (FIII…ILIP).

It belongs to the cytochrome b family. In terms of assembly, the cytochrome bc1 complex contains 3 respiratory subunits (MT-CYB, CYC1 and UQCRFS1), 2 core proteins (UQCRC1 and UQCRC2) and probably 6 low-molecular weight proteins. Heme b serves as cofactor.

It is found in the mitochondrion inner membrane. Component of the ubiquinol-cytochrome c reductase complex (complex III or cytochrome b-c1 complex) that is part of the mitochondrial respiratory chain. The b-c1 complex mediates electron transfer from ubiquinol to cytochrome c. Contributes to the generation of a proton gradient across the mitochondrial membrane that is then used for ATP synthesis. The chain is Cytochrome b (mt-cyb) from Atractosteus spatula (Alligator gar).